The sequence spans 432 residues: D-amino acid dehydrogenase (432 aa).

FAD is bound at residue 3 to 17 (VVILGSGVVGVASAW).

Belongs to the DadA oxidoreductase family. Requires FAD as cofactor.

It carries out the reaction a D-alpha-amino acid + A + H2O = a 2-oxocarboxylate + AH2 + NH4(+). The protein operates within amino-acid degradation; D-alanine degradation; NH(3) and pyruvate from D-alanine: step 1/1. Functionally, oxidative deamination of D-amino acids. In Shigella sonnei (strain Ss046), this protein is D-amino acid dehydrogenase.